Here is a 434-residue protein sequence, read N- to C-terminus: Trigger factor (434 aa).

Residues 161 to 246 (KDIVTIDFKG…IHKVEEPQLP (86 aa)) enclose the PPIase FKBP-type domain.

It belongs to the FKBP-type PPIase family. Tig subfamily.

Its subcellular location is the cytoplasm. It catalyses the reaction [protein]-peptidylproline (omega=180) = [protein]-peptidylproline (omega=0). Involved in protein export. Acts as a chaperone by maintaining the newly synthesized protein in an open conformation. Functions as a peptidyl-prolyl cis-trans isomerase. This Marinobacter nauticus (strain ATCC 700491 / DSM 11845 / VT8) (Marinobacter aquaeolei) protein is Trigger factor.